The primary structure comprises 378 residues: Chaperone protein DnaJ (378 aa).

The 66-residue stretch at Asp-5–Gly-70 folds into the J domain. The CR-type zinc-finger motif lies at Gly-138–Thr-216. Residues Cys-151, Cys-154, Cys-168, Cys-171, Cys-190, Cys-193, Cys-204, and Cys-207 each contribute to the Zn(2+) site. 4 CXXCXGXG motif repeats span residues Cys-151–Gly-158, Cys-168–Gly-175, Cys-190–Gly-197, and Cys-204–Gly-211.

The protein belongs to the DnaJ family. Homodimer. Zn(2+) is required as a cofactor.

It is found in the cytoplasm. Functionally, participates actively in the response to hyperosmotic and heat shock by preventing the aggregation of stress-denatured proteins and by disaggregating proteins, also in an autonomous, DnaK-independent fashion. Unfolded proteins bind initially to DnaJ; upon interaction with the DnaJ-bound protein, DnaK hydrolyzes its bound ATP, resulting in the formation of a stable complex. GrpE releases ADP from DnaK; ATP binding to DnaK triggers the release of the substrate protein, thus completing the reaction cycle. Several rounds of ATP-dependent interactions between DnaJ, DnaK and GrpE are required for fully efficient folding. Also involved, together with DnaK and GrpE, in the DNA replication of plasmids through activation of initiation proteins. This chain is Chaperone protein DnaJ, found in Burkholderia vietnamiensis (strain G4 / LMG 22486) (Burkholderia cepacia (strain R1808)).